A 409-amino-acid chain; its full sequence is DEP domain-containing mTOR-interacting protein (409 aa).

Methionine 1 carries the post-translational modification N-acetylmethionine. The tract at residues 1–25 (MEEGGSTGSAGSDSSTSGSGGAQQR) is disordered. DEP domains are found at residues 36–119 (TGEQ…RFRK) and 145–219 (SPEN…QFRM). The DDEX motif signature appears at 217 to 235 (FRMNFRRRRRLMELLNEKS). Serine 235 is modified (phosphoserine; by MAPK3). The residue at position 241 (threonine 241) is a Phosphothreonine. Phosphoserine occurs at positions 244 and 258. Threonine 259 bears the Phosphothreonine mark. Serine 263, serine 265, serine 280, serine 282, and serine 283 each carry phosphoserine. Phosphoserine; by CK1 is present on residues serine 286 and serine 287. Residues 286–291 (SSGYFS) carry the BetaTrCP degron motif motif. Tyrosine 289 bears the Phosphotyrosine; by SYK mark. The residue at position 291 (serine 291) is a Phosphoserine; by CK1. A Phosphoserine; by MTOR modification is found at serine 293. Residue threonine 295 is modified to Phosphothreonine; by MTOR. Residues serine 297 and serine 298 each carry the phosphoserine modification. Serine 299 is subject to Phosphoserine; by MTOR. The region spanning 330–407 (TFTIVGDAVG…TIVMEVMEEL (78 aa)) is the PDZ domain.

Associated component of the mechanistic target of rapamycin complex 1 (mTORC1) which contains MTOR, MLST8 and RPTOR. Associated component of the mechanistic target of rapamycin complex 2 (mTORC2) which contains MTOR, MLST8, PROTOR1, RICTOR, MAPKAP1 and DEPTOR. Interacts (via PDZ domain) with MTOR; interacts with MTOR within both mTORC1 and mTORC2. Interacts (via PDZ domain) with MINAR1 (via N-terminus). Interacts with SIK3. In terms of processing, phosphorylation weakens interaction with MTOR within mTORC1 and mTORC2. Phosphorylated at Ser-286, Ser-287 and Ser-291 in response to mitogenic stimulation by MTOR: DEPTOR is either directly phosphorylated by MTOR or indirectly via proteins kinases that are activated by MTOR, such as CK1/CSNK1A1. Phosphorylation at Ser-286, Ser-287 and Ser-291 promotes ubiquitination by the SCF(BTRC) complex, followed by degradation. Phosphorylation at Ser-235 by MAPK3/ERK1 promotes deubiquitination by USP7, enhancing its stability. Phosphorylation at Tyr-289 by SYK impairs its interaction with MTOR, promoting mTORC1 and mTORC2 signaling. Ubiquitinated; leading to proteasomal degradation. Ubiquitination by the SCF(BTRC) and SCF(FBXW11) complexes following phosphorylation at Ser-286, Ser-287 and Ser-291 by MTOR, leads to its degradation by the proteasome. Deubiquitinated by OTUB1 in response to amino acid via a non-canonical mechanism, leading to DEPTOR stability. Deubiquitinated by USP7 following phosphorylation at Ser-235, promoting its stability.

It is found in the lysosome membrane. Inhibited upon phosphatidic acid-binding: phosphatidic acid produced upon mitogenic stimulation promotes DEPTOR dissociatiom from the mTORC1 and mTORC2 complexes, leading to their activation. Specifically binds unsaturated phosphatidic acid, such as 16:0-18:1, 18:0-18:1 and di-18:1. Inhibited when nutrients are present via a feedback loop: phosphorylation by MTOR promotes DEPTOR ubiquitination and degradation. In terms of biological role, negative regulator of the mTORC1 and mTORC2 complexes: inhibits the protein kinase activity of MTOR, thereby inactivating both complexes. DEPTOR inhibits mTORC1 and mTORC2 to induce autophagy. In contrast to AKT1S1/PRAS40, only partially inhibits mTORC1 activity. The protein is DEP domain-containing mTOR-interacting protein of Homo sapiens (Human).